The chain runs to 345 residues: 4-hydroxyproline 2-epimerase (345 aa).

Residue Gln-85 participates in substrate binding. Ser-93 (proton acceptor) is an active-site residue. Substrate contacts are provided by residues 94–95 (GS) and Asp-251. Cys-255 acts as the Proton donor in catalysis. 256–257 (GT) contributes to the substrate binding site.

This sequence belongs to the proline racemase family.

It carries out the reaction trans-4-hydroxy-L-proline = cis-4-hydroxy-D-proline. Functionally, catalyzes the epimerization of trans-4-hydroxy-L-proline (t4LHyp) to cis-4-hydroxy-D-proline (c4DHyp). May be involved in a degradation pathway of t4LHyp. Can also catalyze the epimerization of trans-3-hydroxy-L-proline (t3LHyp) to cis-3-hydroxy-D-proline (c3DHyp) in vitro, albeit with 2-fold lower efficiency. Displays no proline racemase activity. This is 4-hydroxyproline 2-epimerase from Rhizobium etli (strain ATCC 51251 / DSM 11541 / JCM 21823 / NBRC 15573 / CFN 42).